The sequence spans 95 residues: Aspartyl/glutamyl-tRNA(Asn/Gln) amidotransferase subunit C (95 aa).

The protein belongs to the GatC family. In terms of assembly, heterotrimer of A, B and C subunits.

The catalysed reaction is L-glutamyl-tRNA(Gln) + L-glutamine + ATP + H2O = L-glutaminyl-tRNA(Gln) + L-glutamate + ADP + phosphate + H(+). It catalyses the reaction L-aspartyl-tRNA(Asn) + L-glutamine + ATP + H2O = L-asparaginyl-tRNA(Asn) + L-glutamate + ADP + phosphate + 2 H(+). Functionally, allows the formation of correctly charged Asn-tRNA(Asn) or Gln-tRNA(Gln) through the transamidation of misacylated Asp-tRNA(Asn) or Glu-tRNA(Gln) in organisms which lack either or both of asparaginyl-tRNA or glutaminyl-tRNA synthetases. The reaction takes place in the presence of glutamine and ATP through an activated phospho-Asp-tRNA(Asn) or phospho-Glu-tRNA(Gln). The sequence is that of Aspartyl/glutamyl-tRNA(Asn/Gln) amidotransferase subunit C from Dinoroseobacter shibae (strain DSM 16493 / NCIMB 14021 / DFL 12).